The sequence spans 111 residues: Nucleoid-associated protein NMCC_1355 (111 aa).

Belongs to the YbaB/EbfC family. Homodimer.

Its subcellular location is the cytoplasm. The protein localises to the nucleoid. Binds to DNA and alters its conformation. May be involved in regulation of gene expression, nucleoid organization and DNA protection. The sequence is that of Nucleoid-associated protein NMCC_1355 from Neisseria meningitidis serogroup C (strain 053442).